A 615-amino-acid chain; its full sequence is DNA mismatch repair protein MutL (615 aa).

The disordered stretch occupies residues 363–397; it reads FAEPAAREPVAPRYTPAPASGSRPAAPWPNAQPGY. Over residues 364–391 the composition is skewed to low complexity; sequence AEPAAREPVAPRYTPAPASGSRPAAPWP.

It belongs to the DNA mismatch repair MutL/HexB family.

Functionally, this protein is involved in the repair of mismatches in DNA. It is required for dam-dependent methyl-directed DNA mismatch repair. May act as a 'molecular matchmaker', a protein that promotes the formation of a stable complex between two or more DNA-binding proteins in an ATP-dependent manner without itself being part of a final effector complex. In Escherichia coli (strain ATCC 8739 / DSM 1576 / NBRC 3972 / NCIMB 8545 / WDCM 00012 / Crooks), this protein is DNA mismatch repair protein MutL.